A 347-amino-acid chain; its full sequence is MRIEEDLKLGFKDVLIRPKRSTLKSRSDVELERQFTFKYSGQTWSGVPIIAANMDTVGTFEMAQALAGFDILTAVHKHYTVEEWAAFINTASADVLKHVMVSTGTSDADFEKTVQILALNPALNFVCIDVANGYSEHFVQFVAKAREAWPTKTICAGNVVTGEMCEEPILSGADIVKVGIGPGSVCTTRVKTGVGYPQLSAVIECADAAHGLGGMIVSDGGCTMPGDVAKAFGGGADFVMLGGMLAGHEESGGSVVEENGEKFMLFYGMSSESAMNRHVGGVAKYRAAEGKTVKLPLRGPVGNTARDILGGLRSACTYVGASRLKELTKRTTFIRVQEQENRIFNSL.

108-131 (ADFEKTVQILALNPALNFVCIDVA) is a binding site for NADP(+). Gly181 and Gly183 together coordinate K(+). Residue Cys186 is the Thioimidate intermediate of the active site. 216–239 (IVSDGGCTMPGDVAKAFGGGADFV) is an NADP(+) binding site.

It belongs to the IMPDH/GMPR family. GuaC type 1 subfamily. As to quaternary structure, homotetramer.

It carries out the reaction IMP + NH4(+) + NADP(+) = GMP + NADPH + 2 H(+). In terms of biological role, catalyzes the irreversible NADPH-dependent deamination of GMP to IMP. It functions in the conversion of nucleobase, nucleoside and nucleotide derivatives of G to A nucleotides, and in maintaining the intracellular balance of A and G nucleotides. The chain is GMP reductase from Salmonella choleraesuis (strain SC-B67).